A 371-amino-acid chain; its full sequence is N-acetyldiaminopimelate deacetylase (371 aa).

The active site involves D68. The active-site Proton acceptor is E127.

It belongs to the peptidase M20A family. N-acetyldiaminopimelate deacetylase subfamily.

It catalyses the reaction N-acetyl-(2S,6S)-2,6-diaminopimelate + H2O = (2S,6S)-2,6-diaminopimelate + acetate. It functions in the pathway amino-acid biosynthesis; L-lysine biosynthesis via DAP pathway; LL-2,6-diaminopimelate from (S)-tetrahydrodipicolinate (acetylase route): step 3/3. Functionally, catalyzes the conversion of N-acetyl-diaminopimelate to diaminopimelate and acetate. This is N-acetyldiaminopimelate deacetylase from Halalkalibacterium halodurans (strain ATCC BAA-125 / DSM 18197 / FERM 7344 / JCM 9153 / C-125) (Bacillus halodurans).